We begin with the raw amino-acid sequence, 246 residues long: Eukaryotic translation initiation factor 6 (246 aa).

A phosphoserine; by CK1 mark is found at Ser174 and Ser175.

The protein belongs to the eIF-6 family. Monomer. Associates with the 60S ribosomal subunit. Phosphorylation at Ser-174 and Ser-175 promotes nuclear export.

The protein resides in the cytoplasm. The protein localises to the nucleus. It is found in the nucleolus. Binds to the 60S ribosomal subunit and prevents its association with the 40S ribosomal subunit to form the 80S initiation complex in the cytoplasm. Is also involved in ribosome biogenesis. Associates with pre-60S subunits in the nucleus and is involved in its nuclear export. In Sordaria macrospora (strain ATCC MYA-333 / DSM 997 / K(L3346) / K-hell), this protein is Eukaryotic translation initiation factor 6.